The chain runs to 110 residues: UPF0122 protein YlxM (110 aa).

This sequence belongs to the UPF0122 family.

Its function is as follows. Might take part in the signal recognition particle (SRP) pathway. This is inferred from the conservation of its genetic proximity to ftsY/ffh. May be a regulatory protein. This is UPF0122 protein YlxM (ylxM) from Bacillus subtilis (strain 168).